Consider the following 178-residue polypeptide: Nascent polypeptide-associated complex subunit alpha (178 aa).

Residues 16–80 enclose the NAC-A/B domain; that stretch reads PKNEKKAREL…AKVDDMNQRI (65 aa). Residues 82-100 show a composition bias toward low complexity; that stretch reads EAQAQQAQQEALQKAAADA. The tract at residues 82–145 is disordered; sequence EAQAQQAQQE…DETGLDPKDI (64 aa). The segment covering 101–126 has biased composition (basic and acidic residues); that stretch reads GKTEDKSPEAITADLEKASLGDKKAE. A compositionally biased stretch (acidic residues) spans 127 to 139; the sequence is DEEEDEGEIDETG. The UBA domain maps to 140–178; the sequence is LDPKDIEIVVEQTQVSRAKAVKALRNHDGDMVNAIMDLS.

Belongs to the NAC-alpha family. As to quaternary structure, part of the nascent polypeptide-associated complex (NAC), consisting of EGD2 and EGD1. NAC associates with ribosomes via EGD1.

The protein localises to the cytoplasm. The protein resides in the nucleus. Functionally, component of the nascent polypeptide-associated complex (NAC), a dynamic component of the ribosomal exit tunnel, protecting the emerging polypeptides from interaction with other cytoplasmic proteins to ensure appropriate nascent protein targeting. The NAC complex also promotes mitochondrial protein import by enhancing productive ribosome interactions with the outer mitochondrial membrane and blocks the inappropriate interaction of ribosomes translating non-secretory nascent polypeptides with translocation sites in the membrane of the endoplasmic reticulum. EGD2 may also be involved in transcription regulation. This chain is Nascent polypeptide-associated complex subunit alpha (EGD2), found in Candida albicans (strain SC5314 / ATCC MYA-2876) (Yeast).